Reading from the N-terminus, the 333-residue chain is Gap junction alpha-4 protein (333 aa).

The Cytoplasmic portion of the chain corresponds to 1–20; that stretch reads MGDWGFLEKLLDQVQEHSTV. A helical membrane pass occupies residues 21–40; it reads VGKIWLTVLFIFRILILGLA. Residues 41–76 lie on the Extracellular side of the membrane; sequence GESVWGDEQSDFECNTAQPGCTNVCYDQAFPISHIR. A helical transmembrane segment spans residues 77–99; that stretch reads YWVLQFLFVSTPTLVYLGHVIYL. Residues 100–148 are Cytoplasmic-facing; the sequence is SRREERLRQKEGELRALPAKDPQVERALAAVERQMAKISVAEDGRLRIR. Residues 149–165 form a helical membrane-spanning segment; the sequence is GALMGTYVASVLCKSVL. The Extracellular segment spans residues 166–207; sequence EAGFLYGQWRLYGWTMEPVFVCQRAPCPYLVDCFVSRPTEKT. The helical transmembrane segment at 208–230 threads the bilayer; the sequence is IFIIFMLVVGLISLVLNLLELVH. Residues 231-333 are Cytoplasmic-facing; sequence LLCRCLSRGM…SSSASKKQYV (103 aa). Residues 292–333 form a disordered region; sequence ANLTTEERLASSRPPLFLDPPPQNGQKPPSRPSSSASKKQYV. Low complexity predominate over residues 323–333; it reads PSSSASKKQYV.

It belongs to the connexin family. Alpha-type (group II) subfamily. As to quaternary structure, a connexon is composed of a hexamer of connexins. In terms of tissue distribution, expressed in multiple organs and tissues, including heart, uterus, ovary, and blood vessel endothelium.

It localises to the cell membrane. Its subcellular location is the cell junction. The protein localises to the gap junction. Functionally, one gap junction consists of a cluster of closely packed pairs of transmembrane channels, the connexons, through which materials of low MW diffuse from one cell to a neighboring cell. The protein is Gap junction alpha-4 protein (GJA4) of Homo sapiens (Human).